Consider the following 486-residue polypeptide: Hexosaminidase D (486 aa).

E149 serves as the catalytic Proton donor.

This sequence belongs to the glycosyl hydrolase 20 family. Homodimer; disulfide-linked. Expressed in synovial fibroblasts and synovial membranes.

It localises to the cytoplasm. Its subcellular location is the nucleus. It is found in the extracellular vesicle. It catalyses the reaction Hydrolysis of terminal non-reducing N-acetyl-D-hexosamine residues in N-acetyl-beta-D-hexosaminides.. With respect to regulation, inhibited by O-(2-acetamido-2-deoxy-D-glucopyranosylidene)amino N-phenylcarbamate (PUGNAc). Inhibited by galacto-NAG-thiazoline. Functionally, has hexosaminidase activity. Responsible for the cleavage of the monosaccharides N-acetylglucosamine (GlcNAc) and N-acetylgalactosamine (GalNAc) from cellular substrates. Has a preference for galactosaminide over glucosaminide substrates. The sequence is that of Hexosaminidase D from Homo sapiens (Human).